The chain runs to 464 residues: MGRGWGLLVGLLGVVWLLRSGQGEEQQQETAAQRCFCQVSGYLDDCTCDVETIDKFNNYRLFPRLQKLLESDYFRYYKVNLRKPCPFWNDINQCGRRDCAVKPCHSDEVPDGIKSASYKYSKEANLLEECEQAERLGAVDESLSEETQKAVLQWTKHDDSSDSFCEVDDIQSPDAEYVDLLLNPERYTGYKGPDAWRIWSVIYEENCFKPQTIQRPLASGQGKHKENTFYSWLEGLCVEKRAFYRLISGLHASINVHLSARYLLQDNWLEKKWGHNVTEFQQRFDGVLTEGEGPRRLKNLYFLYLIELRALSKVLPFFERPDFQLFTGNKVQDVENKELLLEILHEVKSFPLHFDENSFFAGDKNEAHKLKEDFRLHFRNISRIMDCVGCFKCRLWGKLQTQGLGTALKILFSEKLIANMPESGPSYEFQLTRQEIVSLFNAFGRISTSVRELENFRHLLQNVH.

The first 23 residues, 1-23 (MGRGWGLLVGLLGVVWLLRSGQG), serve as a signal peptide directing secretion. 8 disulfides stabilise this stretch: cysteine 35-cysteine 48, cysteine 37-cysteine 46, cysteine 85-cysteine 387, cysteine 94-cysteine 99, cysteine 94-cysteine 130, cysteine 99-cysteine 104, cysteine 207-cysteine 237, and cysteine 390-cysteine 393. Serine 106, serine 142, and serine 144 each carry phosphoserine. Residues arginine 186, threonine 188, and tryptophan 199 each coordinate FAD. 2 residues coordinate FAD: serine 248 and histidine 251. Residue asparagine 276 is glycosylated (N-linked (GlcNAc...) asparagine). Arginine 283 and arginine 296 together coordinate FAD. Asparagine 380 carries an N-linked (GlcNAc...) asparagine glycan.

This sequence belongs to the EROs family. Predominantly monomer. May function both as a monomer and a homodimer. Interacts with PDILT. Interacts with ERP44; the interaction results in retention of ERO1A in the endoplasmic reticulum. The cofactor is FAD. N-glycosylated. In terms of processing, the Cys-94/Cys-99 and Cys-390/Cys-393 disulfide bonds constitute the redox-active center. The Cys-94/Cys-99 disulfide bond may accept electron from P4HB and funnel them to the active site disulfide Cys-390/Cys-393. The regulatory Cys-99/Cys-104 disulfide bond stabilizes the other regulatory bond Cys-94/Cys-130. Post-translationally, phosphorylated on Ser-144 by FAM20C in the Golgi which increases its enzymatic activity. Phosphorylation is induced by lactation. It is also induced by hypoxia and reductive stress.

Its subcellular location is the endoplasmic reticulum membrane. The protein localises to the golgi apparatus lumen. It is found in the secreted. The protein resides in the cell projection. It localises to the dendrite. Enzyme activity is tightly regulated to prevent the accumulation of reactive oxygen species in the endoplasmic reticulum. Reversibly down-regulated by the formation of disulfide bonds between the active site Cys-94 and Cys-130, and between Cys-99 and Cys-104. Glutathione may be required to regulate its activity in the endoplasmic reticulum. Functionally, oxidoreductase involved in disulfide bond formation in the endoplasmic reticulum. Efficiently reoxidizes P4HB/PDI, the enzyme catalyzing protein disulfide formation, in order to allow P4HB to sustain additional rounds of disulfide formation. Following P4HB reoxidation, passes its electrons to molecular oxygen via FAD, leading to the production of reactive oxygen species (ROS) in the cell. Required for the proper folding of immunoglobulins. Plays an important role in ER stress-induced, CHOP-dependent apoptosis by activating the inositol 1,4,5-trisphosphate receptor IP3R1. This chain is ERO1-like protein alpha, found in Rattus norvegicus (Rat).